A 204-amino-acid polypeptide reads, in one-letter code: Synaptosomal-associated protein 25-A (204 aa).

Basic and acidic residues predominate over residues 1 to 11 (MAEDSDMRNEL). A disordered region spans residues 1-25 (MAEDSDMRNELADMQQRADQLADES). T-SNARE coiled-coil homology domains are found at residues 19-81 (DQLA…LNDL) and 138-200 (DARE…ATKM).

The protein belongs to the SNAP-25 family. As to expression, expressed in several regions throughout the adult brain, including the mesencephalon.

It is found in the synapse. The protein localises to the synaptosome. The protein resides in the cell membrane. In terms of biological role, may play an important role in the synaptic function of specific neuronal systems. Associates with proteins involved in vesicle docking and membrane fusion. This chain is Synaptosomal-associated protein 25-A, found in Danio rerio (Zebrafish).